The primary structure comprises 324 residues: Probable UDP-sugar transporter protein SLC35A4 (324 aa).

Topologically, residues 1–18 (MSVEDGGMPGLARPKQAR) are cytoplasmic. The chain crosses the membrane as a helical span at residues 19–39 (WTLMLFLSTAMYGAHAPFLAL). The Lumenal segment spans residues 40–52 (CHVDGRVPFRPSS). The chain crosses the membrane as a helical span at residues 53 to 73 (AVLLTELTKLLLCAFSLLVGW). At 74 to 85 (QTWPQGTPPWRQ) the chain is on the cytoplasmic side. A helical membrane pass occupies residues 86–106 (AAPFALSALLYGANNNLVIYL). Topologically, residues 107 to 142 (QRYMDPSTYQVLSNLKIGSTALLYCLCLGHRLSARQ) are lumenal. A helical transmembrane segment spans residues 143–163 (GLALLLLMAAGACYASGGFQE). Topologically, residues 164 to 180 (PGNTLPGPRSAAGARPM) are cytoplasmic. Residues 181 to 201 (PLHITPLGLLLLILYCLISGL) traverse the membrane as a helical segment. At 202–214 (SSVYTELIMKRQR) the chain is on the lumenal side. The helical transmembrane segment at 215–235 (LPLALQNLFLYTFGVILNLGL) threads the bilayer. Residues 236–248 (YAGSGPGPGFLEG) lie on the Cytoplasmic side of the membrane. A helical transmembrane segment spans residues 249 to 271 (FSGWAVLVVLNQAVNGLLMSAVM). Over 272–279 (KHGSSITR) the chain is Lumenal. A helical transmembrane segment spans residues 280-300 (LFIVSCSLVVNAVLSAVLLQL). Residues 301 to 324 (QLTATFFLAALLIGLAVCLYYGSP) are Cytoplasmic-facing.

It belongs to the nucleotide-sugar transporter family. SLC35A subfamily. As to quaternary structure, found in a complex with SLC35A2 and SLC35A3. Expressed in the kidney, lung, testis, and prostate. Expressed in the brain by sets of neurons, such as the pyramidal cells of the cortex, the Purkinje cells of the cerebellum, and the motoneurons of the brainstem.

The protein localises to the golgi apparatus membrane. It carries out the reaction CDP-L-ribitol(in) + CDP(out) = CDP-L-ribitol(out) + CDP(in). Mediates the transport of CDP-ribitol. Does not exhibit CMP-sialic acid, UDP-galactose and UDP-N-acetylglucosamine transport activity. The polypeptide is Probable UDP-sugar transporter protein SLC35A4 (Rattus norvegicus (Rat)).